The sequence spans 198 residues: MTNADNINEPRLIVETGLDQRIAAIIEPVIVGMDYRLVRVRLMNQNGLTLQVMAERNDGSMNVQGCEEISTAISPVLDVEDPVDKAYHLEVSSPGIDRPMVRKSDFVRWNGHIVKCETSILVDNRKRFRGKITDVNDDGFTIERDQVAYGEEPKVTIPFSTLAEAKLILTDDLIRDALRADKQAKAEAANQNEADEEE.

The protein belongs to the RimP family.

It is found in the cytoplasm. Required for maturation of 30S ribosomal subunits. This chain is Ribosome maturation factor RimP, found in Rhizobium rhizogenes (strain K84 / ATCC BAA-868) (Agrobacterium radiobacter).